The chain runs to 163 residues: CASP-like protein 1C2 (163 aa).

At 1 to 6 (MAKSNK) the chain is on the cytoplasmic side. A helical transmembrane segment spans residues 7–27 (IFTNTLRLLALAATVVAIVFM). Over 28–52 (VTSHDSAQVLNLTFTAKYSNTPAFK) the chain is Extracellular. A glycan (N-linked (GlcNAc...) asparagine) is linked at Asn-38. The helical transmembrane segment at 53 to 73 (FLVIGEAIAGGYTVISILLSF) threads the bilayer. At 74-79 (KGLFWR) the chain is on the cytoplasmic side. The helical transmembrane segment at 80–100 (LIVILDMVTTVLLTSSISAAL) threads the bilayer. Over 101–128 (AIAQVGKKGNTHAGWLPICGQVPDFCDY) the chain is Extracellular. The chain crosses the membrane as a helical span at residues 129-149 (VTIALIAGFAAAIIYFVLLLC). The Cytoplasmic segment spans residues 150 to 163 (SLYVVLSPIFVATP).

Belongs to the Casparian strip membrane proteins (CASP) family. As to quaternary structure, homodimer and heterodimers.

Its subcellular location is the cell membrane. This Populus trichocarpa (Western balsam poplar) protein is CASP-like protein 1C2.